Consider the following 362-residue polypeptide: NAC domain-containing protein 5 (362 aa).

One can recognise an NAC domain in the interval 3–151 (NPVGFRFRPT…TYTLCKVKFK (149 aa)). Residues 107-157 (IGEKRVLVFKNHGGSKSDWAMHEYHATFSSPNQIMTYTLCKVKFKGERREF) mediate DNA binding. Positions 240-266 (DDRNNHTPQKPLTGVFSDHSTDGSDSD) are disordered.

It is found in the nucleus. The sequence is that of NAC domain-containing protein 5 (NAC005) from Arabidopsis thaliana (Mouse-ear cress).